Consider the following 293-residue polypeptide: Digeranylgeranylglyceryl phosphate synthase (293 aa).

A run of 7 helical transmembrane segments spans residues 26–46, 50–70, 107–127, 140–160, 215–235, 237–257, and 273–293; these read LMYG…FSDL, LLGY…NDYF, FVAA…VSVL, FAGN…GSII, IASL…FLLP, FLFD…LIYV, and YRKV…AGAF.

Belongs to the UbiA prenyltransferase family. DGGGP synthase subfamily. Mg(2+) serves as cofactor.

It localises to the cell membrane. It carries out the reaction sn-3-O-(geranylgeranyl)glycerol 1-phosphate + (2E,6E,10E)-geranylgeranyl diphosphate = 2,3-bis-O-(geranylgeranyl)-sn-glycerol 1-phosphate + diphosphate. It participates in membrane lipid metabolism; glycerophospholipid metabolism. Its function is as follows. Prenyltransferase that catalyzes the transfer of the geranylgeranyl moiety of geranylgeranyl diphosphate (GGPP) to the C2 hydroxyl of (S)-3-O-geranylgeranylglyceryl phosphate (GGGP). This reaction is the second ether-bond-formation step in the biosynthesis of archaeal membrane lipids. This Archaeoglobus fulgidus (strain ATCC 49558 / DSM 4304 / JCM 9628 / NBRC 100126 / VC-16) protein is Digeranylgeranylglyceryl phosphate synthase.